A 270-amino-acid chain; its full sequence is Triosephosphate isomerase (270 aa).

27 to 29 (NWK) provides a ligand contact to substrate. Catalysis depends on His114, which acts as the Electrophile. Residue Glu184 is the Proton acceptor of the active site. Substrate is bound by residues Gly190, Ser230, and 251-252 (GG).

It belongs to the triosephosphate isomerase family. Homodimer.

The protein resides in the cytoplasm. It carries out the reaction D-glyceraldehyde 3-phosphate = dihydroxyacetone phosphate. The protein operates within carbohydrate biosynthesis; gluconeogenesis. It functions in the pathway carbohydrate degradation; glycolysis; D-glyceraldehyde 3-phosphate from glycerone phosphate: step 1/1. Involved in the gluconeogenesis. Catalyzes stereospecifically the conversion of dihydroxyacetone phosphate (DHAP) to D-glyceraldehyde-3-phosphate (G3P). In Chlamydia muridarum (strain MoPn / Nigg), this protein is Triosephosphate isomerase.